The following is a 329-amino-acid chain: Glycerol-3-phosphate dehydrogenase [NAD(P)+] (329 aa).

The NADPH site is built by Ser13, Trp14, His34, and Lys105. Sn-glycerol 3-phosphate contacts are provided by Lys105, Gly134, and Ser136. Ala138 contributes to the NADPH binding site. Sn-glycerol 3-phosphate-binding residues include Lys189, Asp242, Ser252, Arg253, and Asn254. The active-site Proton acceptor is Lys189. NADPH is bound at residue Arg253. Positions 277 and 279 each coordinate NADPH.

This sequence belongs to the NAD-dependent glycerol-3-phosphate dehydrogenase family.

The protein resides in the cytoplasm. It catalyses the reaction sn-glycerol 3-phosphate + NAD(+) = dihydroxyacetone phosphate + NADH + H(+). It carries out the reaction sn-glycerol 3-phosphate + NADP(+) = dihydroxyacetone phosphate + NADPH + H(+). The protein operates within membrane lipid metabolism; glycerophospholipid metabolism. Catalyzes the reduction of the glycolytic intermediate dihydroxyacetone phosphate (DHAP) to sn-glycerol 3-phosphate (G3P), the key precursor for phospholipid synthesis. The sequence is that of Glycerol-3-phosphate dehydrogenase [NAD(P)+] from Legionella pneumophila (strain Paris).